The primary structure comprises 144 residues: Small ribosomal subunit protein eS19 (144 aa).

It belongs to the eukaryotic ribosomal protein eS19 family.

The polypeptide is Small ribosomal subunit protein eS19 (RPS19) (Argopecten irradians (Bay scallop)).